A 219-amino-acid polypeptide reads, in one-letter code: Ion-translocating oxidoreductase complex subunit G (219 aa).

Residues 25-45 form a helical membrane-spanning segment; sequence GLLLGLFSLVSALMLALASDA. Threonine 187 carries the FMN phosphoryl threonine modification.

Belongs to the RnfG family. In terms of assembly, the complex is composed of six subunits: RnfA, RnfB, RnfC, RnfD, RnfE and RnfG. Requires FMN as cofactor.

The protein localises to the cellular chromatophore membrane. In terms of biological role, part of a membrane-bound complex that couples electron transfer with translocation of ions across the membrane. The protein is Ion-translocating oxidoreductase complex subunit G of Cereibacter sphaeroides (strain ATCC 17023 / DSM 158 / JCM 6121 / CCUG 31486 / LMG 2827 / NBRC 12203 / NCIMB 8253 / ATH 2.4.1.) (Rhodobacter sphaeroides).